The chain runs to 2729 residues: 3-methylorcinaldehyde synthase (2729 aa).

Positions 99 to 238 (LPAALLIPLA…GTISNLTRQL (140 aa)) are N-terminal acylcarrier protein transacylase domain (SAT). Residues 361-373 (SLASTVDINSGNG) are compositionally biased toward polar residues. The tract at residues 361 to 391 (SLASTVDINSGNGKTRRVKPADAQSSANSTH) is disordered. Residues 397 to 828 (DTDIAIVGMS…GSNASAVLVQ (432 aa)) enclose the Ketosynthase family 3 (KS3) domain. Residues Cys571, His706, and His748 each act as for beta-ketoacyl synthase activity in the active site. The interval 942-1230 (FGGQVSCFVG…FLEAGTNSSV (289 aa)) is malonyl-CoA:ACP transacylase (MAT) domain. Ser1029 acts as the For acyl/malonyl transferase activity in catalysis. Residues 1345–1479 (ETILTFHSSD…GTVAFKNPGD (135 aa)) are N-terminal hotdog fold. The 325-residue stretch at 1345-1669 (ETILTFHSSD…YVKIARPSME (325 aa)) folds into the PKS/mFAS DH domain. The interval 1374-1665 (KQLLRGHMTL…LGIAYVKIAR (292 aa)) is product template (PT) domain. His1380 functions as the Proton acceptor; for dehydratase activity in the catalytic mechanism. A C-terminal hotdog fold region spans residues 1513–1669 (DEMLGNQSIY…YVKIARPSME (157 aa)). Asp1575 functions as the Proton donor; for dehydratase activity in the catalytic mechanism. Residues 1682-1701 (AGGKTTPQTATKPAAAPVVA) are compositionally biased toward low complexity. The tract at residues 1682-1726 (AGGKTTPQTATKPAAAPVVADHTPRTTESASTVNGVNLDDRKPEG) is disordered. Residues 1707-1716 (TTESASTVNG) show a composition bias toward polar residues. Residues 1750-1824 (QDMIARVKAV…GLLQCVAGAL (75 aa)) enclose the Carrier domain. An O-(pantetheine 4'-phosphoryl)serine modification is found at Ser1784. A compositionally biased stretch (low complexity) spans 1835 to 1868 (TLTASSDSGINSAKSSILSGTSTSTSTGTTDTGS). The segment at 1835–1874 (TLTASSDSGINSAKSSILSGTSTSTSTGTTDTGSDVGQSM) is disordered. A methyltransferase (C-MeT) domain region spans residues 2086-2254 (EINPLRIMET…GYVDWTEGMT (169 aa)). The interval 2344 to 2599 (ITGGTGGLGA…GWTPADYVAR (256 aa)) is reductase (R) domain.

The protein operates within secondary metabolite biosynthesis; terpenoid biosynthesis. Its function is as follows. Non-reducing polyketide synthase; part of the gene cluster that mediates the biosynthesis of xenovulene A, an unusual meroterpenoid that has potent inhibitory effects on the human gamma-aminobutyrate A (GABAA) benzodiazepine receptor. The first step of xenovulene A biosynthesis is the biosynthesis of 3-methylorcinaldehyde performed by the non-reducing polyketide synthase aspks1. The salicylate hydroxylase asL1 then catalyzes the oxidative dearomatization of 3-methylorcinaldehyde to yield a dearomatized hydroxycyclohexadione. The 2-oxoglutarate-dependent dioxygenase asL3 further catalyzes the oxidative ring expansion to provide the first tropolone metabolite. The cytochrome P450 monooxygenase asR2 allows the synthesis of tropolone hemiacetal. In parallel, a previously unrecognised class of terpene cyclase, asR6, produces alpha-humulene from farnesylpyrophosphate (FPP). The putative Diels-Alderase asR5 probably catalyzes the formation of the tropolone-humulene skeleton by linking humulene and the polyketide moiety. Oxidative-ring contractions catalyzed by asL4 and asL6 then processively remove carbon atoms from the polyketide to yield xenovulene A. The polypeptide is 3-methylorcinaldehyde synthase (Sarocladium schorii (Acremonium strictum (strain IMI 501407))).